The following is a 200-amino-acid chain: Recombination protein RecR (200 aa).

The C4-type zinc-finger motif lies at 57–72; it reads CRSCRTLTEEELCPQC. The Toprim domain maps to 80-175; sequence TLLCVVEGPT…VASRIAHGVP (96 aa).

It belongs to the RecR family.

In terms of biological role, may play a role in DNA repair. It seems to be involved in an RecBC-independent recombinational process of DNA repair. It may act with RecF and RecO. This is Recombination protein RecR from Pseudomonas savastanoi pv. phaseolicola (strain 1448A / Race 6) (Pseudomonas syringae pv. phaseolicola (strain 1448A / Race 6)).